A 202-amino-acid chain; its full sequence is Superoxide dismutase [Fe] (202 aa).

Positions 27, 82, 164, and 168 each coordinate Fe cation.

Belongs to the iron/manganese superoxide dismutase family. Homodimer. Requires Fe cation as cofactor.

The enzyme catalyses 2 superoxide + 2 H(+) = H2O2 + O2. Functionally, destroys superoxide anion radicals which are normally produced within the cells and which are toxic to biological systems. This is Superoxide dismutase [Fe] (sodA) from Enterococcus faecalis (strain ATCC 700802 / V583).